A 207-amino-acid chain; its full sequence is Dephospho-CoA kinase (207 aa).

Positions 12–207 constitute a DPCK domain; sequence LIGITGMIGG…LYSTLLGKML (196 aa). ATP is bound at residue 20–25; sequence GGGKST.

This sequence belongs to the CoaE family.

It is found in the cytoplasm. It catalyses the reaction 3'-dephospho-CoA + ATP = ADP + CoA + H(+). The protein operates within cofactor biosynthesis; coenzyme A biosynthesis; CoA from (R)-pantothenate: step 5/5. Its function is as follows. Catalyzes the phosphorylation of the 3'-hydroxyl group of dephosphocoenzyme A to form coenzyme A. In Leptospira interrogans serogroup Icterohaemorrhagiae serovar copenhageni (strain Fiocruz L1-130), this protein is Dephospho-CoA kinase.